The following is a 445-amino-acid chain: Phosphoglucosamine mutase (445 aa).

Residue Ser99 is the Phosphoserine intermediate of the active site. Residues Ser99, Asp242, Asp244, and Asp246 each contribute to the Mg(2+) site. Ser99 is subject to Phosphoserine.

This sequence belongs to the phosphohexose mutase family. Mg(2+) is required as a cofactor. In terms of processing, activated by phosphorylation.

The enzyme catalyses alpha-D-glucosamine 1-phosphate = D-glucosamine 6-phosphate. Functionally, catalyzes the conversion of glucosamine-6-phosphate to glucosamine-1-phosphate. The sequence is that of Phosphoglucosamine mutase from Sulfurovum sp. (strain NBC37-1).